The primary structure comprises 207 residues: Guanylate kinase (207 aa).

The 181-residue stretch at 4-184 (GTLYIVSAPS…ALADLHTIIR (181 aa)) folds into the Guanylate kinase-like domain. 11 to 18 (APSGAGKS) lines the ATP pocket.

Belongs to the guanylate kinase family.

Its subcellular location is the cytoplasm. It carries out the reaction GMP + ATP = GDP + ADP. Essential for recycling GMP and indirectly, cGMP. In Photorhabdus laumondii subsp. laumondii (strain DSM 15139 / CIP 105565 / TT01) (Photorhabdus luminescens subsp. laumondii), this protein is Guanylate kinase.